A 62-amino-acid polypeptide reads, in one-letter code: Alpha-toxin Tf4 (62 aa).

Positions 2–62 constitute an LCN-type CS-alpha/beta domain; that stretch reads KEGYPADSKG…SVWDSATNKC (61 aa). 4 cysteine pairs are disulfide-bonded: Cys12-Cys62, Cys16-Cys38, Cys24-Cys43, and Cys28-Cys45. Position 62 is a cysteine amide (Cys62).

As to expression, expressed by the venom gland.

Its subcellular location is the secreted. Functionally, alpha toxins bind voltage-independently at site-3 of sodium channels (Nav) and inhibit the inactivation of the activated channels, thereby blocking neuronal transmission. This toxin is toxic to frogs but non-toxic to insect larvae (T.molitor), mammals (rats) and crustaceans (crabs) at the doses assayed. The polypeptide is Alpha-toxin Tf4 (Tityus fasciolatus (Central Brazilian scorpion)).